A 383-amino-acid chain; its full sequence is LIM/homeobox protein Lhx3 (383 aa).

2 LIM zinc-binding domains span residues 14-73 and 73-136; these read PLCA…RFGT and TKCA…AKQR. Position 48 is a phosphothreonine (Thr48). Ser56 bears the Phosphoserine mark. The homeobox DNA-binding region spans 142 to 201; sequence AKRPRTTITAKQLETLKSAYNTSPKPARHVREQLSSETGLDMRVVQVWFQNRRAKEKRLK. Residues 197-383 are disordered; it reads EKRLKKDAGR…WLDEVDHAQF (187 aa). Tyr212 bears the Phosphotyrosine mark. Residue Ser223 is modified to Phosphoserine. The span at 307-334 shows a compositional bias: low complexity; it reads PAALQSLPGPQPLLSSLVYPEAGLGLVP. The span at 335 to 344 shows a compositional bias: pro residues; that stretch reads AGPPGGPPPM.

Interacts with POU1F1. At neuronal promoters, interacts with LDB1, in motor neurons LDB1 is displaced by ISL1 and a ternary complex is formed in which ISL1 contacts both LHX3 and LDB1; allosteric structural changes in the DNA binding domain of LHX3, induced by the ISL1-LHX3 interaction, may explain differences in sequence specificity of the different complexes. Interacts with LDB2. May interact with CITED2/MRG1.

Its subcellular location is the nucleus. Its function is as follows. Transcription factor. Recognizes and binds to the consensus sequence motif 5'-AATTAATTA-3' in the regulatory elements of target genes, such as glycoprotein hormones alpha chain CGA and visual system homeobox CHX10, positively modulating transcription; transcription can be co-activated by LDB2. Synergistically enhances transcription from the prolactin promoter in cooperation with POU1F1/Pit-1. Required for the establishment of the specialized cells of the pituitary gland and the nervous system. Involved in the development of interneurons and motor neurons in cooperation with LDB1 and ISL1. The chain is LIM/homeobox protein Lhx3 (LHX3) from Sus scrofa (Pig).